Consider the following 329-residue polypeptide: Tyrosine--tRNA ligase (329 aa).

Tyrosine 31, tyrosine 157, glutamine 161, aspartate 164, and glutamine 179 together coordinate L-tyrosine. Residues 220–224 (KMSKS) carry the 'KMSKS' region motif. Lysine 223 lines the ATP pocket.

Belongs to the class-I aminoacyl-tRNA synthetase family. TyrS type 4 subfamily. Homodimer.

It localises to the cytoplasm. The catalysed reaction is tRNA(Tyr) + L-tyrosine + ATP = L-tyrosyl-tRNA(Tyr) + AMP + diphosphate + H(+). Its function is as follows. Catalyzes the attachment of tyrosine to tRNA(Tyr) in a two-step reaction: tyrosine is first activated by ATP to form Tyr-AMP and then transferred to the acceptor end of tRNA(Tyr). The polypeptide is Tyrosine--tRNA ligase (Picrophilus torridus (strain ATCC 700027 / DSM 9790 / JCM 10055 / NBRC 100828 / KAW 2/3)).